We begin with the raw amino-acid sequence, 644 residues long: Exoribonuclease 2 (644 aa).

The 328-residue stretch at 189–516 folds into the RNB domain; the sequence is RQDLTALNFV…NHRLLKAVIK (328 aa). An S1 motif domain is found at 561–643; it reads NTRFAAEIID…ETRSIIARPA (83 aa).

Belongs to the RNR ribonuclease family. RNase II subfamily.

Its subcellular location is the cytoplasm. It catalyses the reaction Exonucleolytic cleavage in the 3'- to 5'-direction to yield nucleoside 5'-phosphates.. In terms of biological role, involved in mRNA degradation. Hydrolyzes single-stranded polyribonucleotides processively in the 3' to 5' direction. The sequence is that of Exoribonuclease 2 from Salmonella agona (strain SL483).